The following is a 229-amino-acid chain: Cytidylate kinase (229 aa).

10 to 18 (GYSSCGKST) is an ATP binding site.

This sequence belongs to the cytidylate kinase family. Type 1 subfamily.

It is found in the cytoplasm. It catalyses the reaction CMP + ATP = CDP + ADP. It carries out the reaction dCMP + ATP = dCDP + ADP. The protein is Cytidylate kinase of Phocaeicola vulgatus (strain ATCC 8482 / DSM 1447 / JCM 5826 / CCUG 4940 / NBRC 14291 / NCTC 11154) (Bacteroides vulgatus).